A 558-amino-acid chain; its full sequence is Two-component response regulator-like APRR5 (558 aa).

The Response regulatory domain occupies 51 to 169 (RVLLVEADDS…ELRNLWQHVW (119 aa)). Positions 180–233 (FPWNESVGQQKAEGASANNSNGKRDDHVVSGNGGDAQSSCTRPEMEGESADVEV) are disordered. Positions 240-260 (QMECAKSQFNETRLLANELQS) form a coiled coil. 2 disordered regions span residues 297-319 (SLRR…HPSS) and 535-558 (KKLA…TQAP). Positions 303–319 (ASENQSSGDRPSLHPSS) are enriched in polar residues. A CCT domain is found at 509 to 551 (REAALTKFRMKRKDRCYEKKVRYESRKKLAEQRPRIKGQFVRQ).

It belongs to the ARR-like family. In terms of assembly, interacts with ADO1 and ADO2. Interacts with SPY (via N-terminus). Post-translationally, phosphorylation varies throughout the diurnal cycle and enhances ADO1 binding. O-fucosylated by SPY. O-fucosylation promotes APRR5 proteolysis.

The protein localises to the nucleus. In terms of biological role, transcriptional repressor of CCA1 and LHY, thereby controlling photoperiodic flowering response. Involved in the positive and negative feedback loops of the circadian clock. With RVE8, forms a negative feedback loop of the circadian clock. Expression of several members of the ARR-like family is controlled by circadian rhythm. Proteolytic substrate of the E3 ubiquitin ligase SCF(ADO1) complex. APRR9, APRR7, and APRR5 coordinately act on the upstream region of the target genes to repress their expression from noon until midnight. The particular coordinated sequential expression of APRR9, APRR7, APRR5, APRR3 and APPR1 result to circadian waves that may be at the basis of the endogenous circadian clock. Negative regulator of shade avoidance response. Involved in the inhibition of leaf expansion in shade avoidance response. The polypeptide is Two-component response regulator-like APRR5 (APRR5) (Arabidopsis thaliana (Mouse-ear cress)).